A 775-amino-acid chain; its full sequence is DENN domain-containing protein 1B (775 aa).

The region spanning 14-143 (DLVLKVKCHA…YNHPVPKANT (130 aa)) is the uDENN domain. The 137-residue stretch at 180-316 (GLPTIPESRN…VVSALKNKLK (137 aa)) folds into the cDENN domain. The dDENN domain occupies 318-395 (QSTATGDGVA…DGRLAKLNAG (78 aa)). The short motif at 398–402 (FSDVF) is the FXDXF motif element. A Phosphotyrosine modification is found at Y520. Phosphoserine occurs at positions 535, 536, 549, and 552. The Clathrin box signature appears at 566–575 (DLLGEILDTL). Disordered stretches follow at residues 635–654 (DSAL…VSSS) and 671–706 (HLGA…KRET). Over residues 639–651 (HGKHLPPSPRKRV) the composition is skewed to basic residues. S652 and S653 each carry phosphoserine. Basic and acidic residues predominate over residues 695-706 (QTDKGKTEKRET).

Interacts with RAB35. Interacts with clathrin heavy chain/CLTC. Interacts with components of the adapter protein complex 2 (AP-2) AP2A2 and AP2B1. Interacts with CD3E. Post-translationally, phosphorylated on serine and/or threonine, possibly regulating the guanine nucleotide exchange factor (GEF) activity. As to expression, highly expressed in dendritic and natural killer cells and at lower levels in other myeloid lineage cells and in pituitary. Significantly up-regulated in effector memory T-cells as compared with naive T-cells.

The protein resides in the cytoplasm. Its subcellular location is the cytosol. The protein localises to the cytoplasmic vesicle. It is found in the clathrin-coated vesicle. In terms of biological role, guanine nucleotide exchange factor (GEF) for RAB35 that acts as a regulator of T-cell receptor (TCR) internalization in TH2 cells. Acts by promoting the exchange of GDP to GTP, converting inactive GDP-bound RAB35 into its active GTP-bound form. Plays a role in clathrin-mediated endocytosis. Controls cytokine production in TH2 lymphocytes by controlling the rate of TCR internalization and routing to endosomes: acts by mediating clathrin-mediated endocytosis of TCR via its interaction with the adapter protein complex 2 (AP-2) and GEF activity. Dysregulation leads to impaired TCR down-modulation and recycling, affecting cytokine production in TH2 cells. This Homo sapiens (Human) protein is DENN domain-containing protein 1B.